The following is a 132-amino-acid chain: MLQSIPALPVGDIKKSIGFYCDKLGFTLVHHEDGFAVLMCNEVRIHLWEASDEGWRSRSNDSPVCTGAESFIAGTASCRIEVEGIDELYQHIKPLGILHPNTSLKDQWWDERDFAVIDPDNNLISFFQQIKS.

A VOC domain is found at 1–129 (MLQSIPALPV…DNNLISFFQQ (129 aa)).

The protein belongs to the bleomycin resistance protein family.

Binding protein with a strong affinity to the bleomycin family of antibiotics. In Geobacillus stearothermophilus (Bacillus stearothermophilus), this protein is Bleomycin resistance protein (bleO).